A 319-amino-acid chain; its full sequence is NH(3)-dependent NAD(+) synthetase (319 aa).

33–40 (GLSGGIDS) contributes to the ATP binding site. Residue Asp39 coordinates Mg(2+). Arg169 is a deamido-NAD(+) binding site. Thr189 contributes to the ATP binding site. Glu194 serves as a coordination point for Mg(2+). 2 residues coordinate deamido-NAD(+): Lys202 and Asp209. ATP-binding residues include Lys218 and Thr240.

This sequence belongs to the NAD synthetase family. In terms of assembly, homodimer.

The catalysed reaction is deamido-NAD(+) + NH4(+) + ATP = AMP + diphosphate + NAD(+) + H(+). Its pathway is cofactor biosynthesis; NAD(+) biosynthesis; NAD(+) from deamido-NAD(+) (ammonia route): step 1/1. In terms of biological role, catalyzes the ATP-dependent amidation of deamido-NAD to form NAD. Uses ammonia as a nitrogen source. This chain is NH(3)-dependent NAD(+) synthetase, found in Mesorhizobium japonicum (strain LMG 29417 / CECT 9101 / MAFF 303099) (Mesorhizobium loti (strain MAFF 303099)).